The chain runs to 276 residues: Mitochondrial outer membrane protein porin 1 (276 aa).

The protein belongs to the eukaryotic mitochondrial porin (TC 1.B.8.1) family. As to expression, expressed in shoot meristems, root meristematic zone, lateral roots, leaves, stigma and anthers.

It localises to the mitochondrion outer membrane. Its function is as follows. Forms a channel through the mitochondrial outer membrane that allows diffusion of small hydrophilic molecules. The channel adopts an open conformation at low or zero membrane potential and a closed conformation at potentials above 30-40 mV. The open state has a weak anion selectivity whereas the closed state is cation-selective. Involved in plant development at reproductive stage, is important for pollen development and may regulate hydrogen peroxide generation during disease resistance. The sequence is that of Mitochondrial outer membrane protein porin 1 (VDAC1) from Arabidopsis thaliana (Mouse-ear cress).